A 348-amino-acid polypeptide reads, in one-letter code: Dihydroorotase (348 aa).

Residues histidine 17 and histidine 19 each coordinate Zn(2+). Substrate is bound by residues histidine 19 to arginine 21 and asparagine 45. Zn(2+) is bound by residues lysine 103, histidine 140, and histidine 178. N6-carboxylysine is present on lysine 103. A substrate-binding site is contributed by histidine 140. Leucine 223 provides a ligand contact to substrate. A Zn(2+)-binding site is contributed by aspartate 251. The active site involves aspartate 251. Substrate contacts are provided by histidine 255 and alanine 267.

This sequence belongs to the metallo-dependent hydrolases superfamily. DHOase family. Class II DHOase subfamily. Homodimer. It depends on Zn(2+) as a cofactor.

The catalysed reaction is (S)-dihydroorotate + H2O = N-carbamoyl-L-aspartate + H(+). Its pathway is pyrimidine metabolism; UMP biosynthesis via de novo pathway; (S)-dihydroorotate from bicarbonate: step 3/3. In terms of biological role, catalyzes the reversible cyclization of carbamoyl aspartate to dihydroorotate. This is Dihydroorotase from Yersinia pseudotuberculosis serotype O:1b (strain IP 31758).